The primary structure comprises 676 residues: Kojibiose hydrolase (676 aa).

An N-terminal signal peptide occupies residues 1-20 (MNKGIIQLLALSLFCISVKA). Residue Glu-469 is the Proton donor of the active site. The Proton acceptor role is filled by Glu-613.

Belongs to the glycosyl hydrolase 65 family.

It catalyses the reaction kojibiose + H2O = beta-D-glucose + D-glucose. Its function is as follows. Glycosidase that specifically hydrolyzes kojibiose to beta-glucose and glucose. Besides its activity on kojibiose, is also able to act on alpha-1,2-oligoglucans with a higher degree of polymerization. Shows weak activity on nigerose, but is not capable of breaking down trehalose, maltose, isomaltose, sucrose, isomaltulose, turanose or melezitose. The protein is Kojibiose hydrolase of Mucilaginibacter mallensis.